A 138-amino-acid chain; its full sequence is Cysteine desulfuration protein SufE (138 aa).

Cysteine 51 (cysteine persulfide intermediate) is an active-site residue.

This sequence belongs to the SufE family. Homodimer. Interacts with SufS.

The protein localises to the cytoplasm. It participates in cofactor biosynthesis; iron-sulfur cluster biosynthesis. In terms of biological role, participates in cysteine desulfuration mediated by SufS. Cysteine desulfuration mobilizes sulfur from L-cysteine to yield L-alanine and constitutes an essential step in sulfur metabolism for biosynthesis of a variety of sulfur-containing biomolecules. Functions as a sulfur acceptor for SufS, by mediating the direct transfer of the sulfur atom from the S-sulfanylcysteine of SufS, an intermediate product of cysteine desulfuration process. This is Cysteine desulfuration protein SufE from Photorhabdus laumondii subsp. laumondii (strain DSM 15139 / CIP 105565 / TT01) (Photorhabdus luminescens subsp. laumondii).